Consider the following 503-residue polypeptide: AMP phosphorylase (503 aa).

Residues glycine 168, 194–199, and threonine 203 contribute to the AMP site; that span reads SRAITS. Aspartate 256 functions as the Proton donor in the catalytic mechanism. Serine 264 and lysine 288 together coordinate AMP.

It belongs to the thymidine/pyrimidine-nucleoside phosphorylase family. Type 2 subfamily.

The catalysed reaction is AMP + phosphate = alpha-D-ribose 1,5-bisphosphate + adenine. It carries out the reaction CMP + phosphate = cytosine + alpha-D-ribose 1,5-bisphosphate. It catalyses the reaction UMP + phosphate = alpha-D-ribose 1,5-bisphosphate + uracil. In terms of biological role, catalyzes the conversion of AMP and phosphate to adenine and ribose 1,5-bisphosphate (R15P). Exhibits phosphorylase activity toward CMP and UMP in addition to AMP. Functions in an archaeal AMP degradation pathway, together with R15P isomerase and RubisCO. This chain is AMP phosphorylase, found in Thermococcus sibiricus (strain DSM 12597 / MM 739).